Consider the following 90-residue polypeptide: Large ribosomal subunit protein uL23c (90 aa).

Belongs to the universal ribosomal protein uL23 family. As to quaternary structure, part of the 50S ribosomal subunit.

It localises to the plastid. The protein resides in the chloroplast. Functionally, binds to 23S rRNA. The polypeptide is Large ribosomal subunit protein uL23c (rpl23) (Psilotum nudum (Whisk fern)).